The chain runs to 463 residues: Kynureninase 2 (463 aa).

Pyridoxal 5'-phosphate-binding positions include Leu-134, Thr-135, 162–165 (FPSD), Asp-247, His-250, and Tyr-272. Lys-273 is modified (N6-(pyridoxal phosphate)lysine). Trp-312 and Asn-340 together coordinate pyridoxal 5'-phosphate.

The protein belongs to the kynureninase family. As to quaternary structure, homodimer. It depends on pyridoxal 5'-phosphate as a cofactor.

The protein resides in the cytoplasm. The enzyme catalyses L-kynurenine + H2O = anthranilate + L-alanine + H(+). It catalyses the reaction 3-hydroxy-L-kynurenine + H2O = 3-hydroxyanthranilate + L-alanine + H(+). The protein operates within amino-acid degradation; L-kynurenine degradation; L-alanine and anthranilate from L-kynurenine: step 1/1. Its pathway is cofactor biosynthesis; NAD(+) biosynthesis; quinolinate from L-kynurenine: step 2/3. Its function is as follows. Catalyzes the cleavage of L-kynurenine (L-Kyn) and L-3-hydroxykynurenine (L-3OHKyn) into anthranilic acid (AA) and 3-hydroxyanthranilic acid (3-OHAA), respectively. The sequence is that of Kynureninase 2 (bna5-2) from Aspergillus niger (strain ATCC MYA-4892 / CBS 513.88 / FGSC A1513).